The following is a 368-amino-acid chain: uncharacterized protein (368 aa).

The protein belongs to the ornithine cyclodeaminase/mu-crystallin family.

This is an uncharacterized protein from Dictyostelium discoideum (Social amoeba).